We begin with the raw amino-acid sequence, 85 residues long: Arminin 6494 (85 aa).

The N-terminal stretch at 1–18 (MKTVFAILFLAFIALTYA) is a signal peptide. A propeptide spanning residues 19–57 (RSYEDVKEEIKNEVEKEILEDLEEESDELNDKRKEINDA) is cleaved from the precursor. An Alanine amide modification is found at Ala-82.

The protein belongs to the arminin family. In terms of tissue distribution, expressed in entodermal epithelium along the body column.

The protein resides in the secreted. It localises to the target cell membrane. In terms of biological role, antimicrobial peptide with a broad-spectrum antimicrobial activity. Keeps its antibacterial activity under a wide range of salt concentrations that mimic physiological conditions of human blood, which is surprising, since Hydra is an obligate freshwater animal with nearly no salt tolerance. Does not affect red blood cells. This Hydra vulgaris (Hydra) protein is Arminin 6494.